The following is a 335-amino-acid chain: DNA-directed RNA polymerase subunit alpha (335 aa).

An alpha N-terminal domain (alpha-NTD) region spans residues M1–E233. Residues K263–R335 form an alpha C-terminal domain (alpha-CTD) region.

Belongs to the RNA polymerase alpha chain family. In terms of assembly, in plastids the minimal PEP RNA polymerase catalytic core is composed of four subunits: alpha, beta, beta', and beta''. When a (nuclear-encoded) sigma factor is associated with the core the holoenzyme is formed, which can initiate transcription.

The protein localises to the plastid. It localises to the chloroplast. It catalyses the reaction RNA(n) + a ribonucleoside 5'-triphosphate = RNA(n+1) + diphosphate. Functionally, DNA-dependent RNA polymerase catalyzes the transcription of DNA into RNA using the four ribonucleoside triphosphates as substrates. This Spinacia oleracea (Spinach) protein is DNA-directed RNA polymerase subunit alpha.